A 96-amino-acid polypeptide reads, in one-letter code: NADH-ubiquinone oxidoreductase chain 4L (96 aa).

Helical transmembrane passes span M1 to L21, M27 to F47, and I61 to I81.

It belongs to the complex I subunit 4L family.

It is found in the mitochondrion membrane. It carries out the reaction a ubiquinone + NADH + 5 H(+)(in) = a ubiquinol + NAD(+) + 4 H(+)(out). Functionally, core subunit of the mitochondrial membrane respiratory chain NADH dehydrogenase (Complex I) which catalyzes electron transfer from NADH through the respiratory chain, using ubiquinone as an electron acceptor. Part of the enzyme membrane arm which is embedded in the lipid bilayer and involved in proton translocation. The polypeptide is NADH-ubiquinone oxidoreductase chain 4L (MT-ND4L) (Lycodon semicarinatus (Ryukyu odd-tooth snake)).